We begin with the raw amino-acid sequence, 319 residues long: MNPNYLDFEQPIADLEAKIQELRKASTGPAVNVDAEVRALRDKLRVRTAQIFRDLSAWQVSQLARHPQRPYTLDYINTMCDEFQELAGDRAYADDKAIVGGLGRIDGRPVVIIGHQKGRDTKSKVARNFGMPRPEGYRKALRLMKLAERFRLPLLTFIDTPGAYPGIGAEERGQSEAIARNLMEMAELKVPVICTVIGEGGSGGALAIGVGDRTLMLEYGTYSVISPEGCASILWKDAAKAKDAAEQLGLTAKRLKGLGLVDKVIREPTGGAHRNPEQMGKRLKAVLLNELDALEKVPVDALMQQRYERLRSYGAYEGH.

Residues 32–293 (NVDAEVRALR…KAVLLNELDA (262 aa)) form the CoA carboxyltransferase C-terminal domain.

Belongs to the AccA family. In terms of assembly, acetyl-CoA carboxylase is a heterohexamer composed of biotin carboxyl carrier protein (AccB), biotin carboxylase (AccC) and two subunits each of ACCase subunit alpha (AccA) and ACCase subunit beta (AccD).

The protein localises to the cytoplasm. It catalyses the reaction N(6)-carboxybiotinyl-L-lysyl-[protein] + acetyl-CoA = N(6)-biotinyl-L-lysyl-[protein] + malonyl-CoA. It functions in the pathway lipid metabolism; malonyl-CoA biosynthesis; malonyl-CoA from acetyl-CoA: step 1/1. Component of the acetyl coenzyme A carboxylase (ACC) complex. First, biotin carboxylase catalyzes the carboxylation of biotin on its carrier protein (BCCP) and then the CO(2) group is transferred by the carboxyltransferase to acetyl-CoA to form malonyl-CoA. The sequence is that of Acetyl-coenzyme A carboxylase carboxyl transferase subunit alpha from Xanthomonas campestris pv. campestris (strain B100).